Consider the following 407-residue polypeptide: Probable endo-beta-1,4-glucanase celB (407 aa).

An N-terminal signal peptide occupies residues 1 to 18 (MAQTLAAASLVLVPLVTA). N-linked (GlcNAc...) asparagine glycosylation occurs at Asn136. Residue Glu216 is the Nucleophile of the active site. Glu221 acts as the Proton donor in catalysis.

Belongs to the glycosyl hydrolase 7 (cellulase C) family.

It is found in the secreted. The catalysed reaction is Endohydrolysis of (1-&gt;4)-beta-D-glucosidic linkages in cellulose, lichenin and cereal beta-D-glucans.. Functionally, has endoglucanase activity on substrates containing beta-1,4 glycosidic bonds, like in carboxymethylcellulose (CMC), hydroxyethylcellulose (HEC) and beta-glucan. Involved in the degradation of complex natural cellulosic substrates. The sequence is that of Probable endo-beta-1,4-glucanase celB (celB) from Aspergillus fumigatus (strain ATCC MYA-4609 / CBS 101355 / FGSC A1100 / Af293) (Neosartorya fumigata).